Consider the following 650-residue polypeptide: Threonine--tRNA ligase (650 aa).

The region spanning 3–65 (DLVKVTLPDG…DRDARLEIVT (63 aa)) is the TGS domain. A catalytic region spans residues 248–548 (DHRRLGPQLG…LTEHYAGAFP (301 aa)). Zn(2+) is bound by residues Cys349, His400, and His525.

It belongs to the class-II aminoacyl-tRNA synthetase family. As to quaternary structure, homodimer. The cofactor is Zn(2+).

Its subcellular location is the cytoplasm. It carries out the reaction tRNA(Thr) + L-threonine + ATP = L-threonyl-tRNA(Thr) + AMP + diphosphate + H(+). In terms of biological role, catalyzes the attachment of threonine to tRNA(Thr) in a two-step reaction: L-threonine is first activated by ATP to form Thr-AMP and then transferred to the acceptor end of tRNA(Thr). Also edits incorrectly charged L-seryl-tRNA(Thr). This chain is Threonine--tRNA ligase, found in Anaeromyxobacter dehalogenans (strain 2CP-C).